The chain runs to 334 residues: Zinc-finger homeodomain protein 10 (334 aa).

Over residues 1–15 (MMDMTPTITTTTTPT) the composition is skewed to low complexity. Disordered stretches follow at residues 1 to 33 (MMDM…QPAK) and 103 to 164 (FHRR…LLSL). The segment at 56–107 (YKECLKNHAAALGGHALDGCGEFMPSPSSISSDPTSLKCAACGCHRNFHRRD) adopts a ZF-HD dimerization-type; degenerate zinc-finger fold. A compositionally biased stretch (pro residues) spans 136-155 (PPPPPPPPPRSPNSASPPPI). The segment at residues 200–263 (RKRFRTKFSQ…NNKNTFNRRD (64 aa)) is a DNA-binding region (homeobox). The interval 292–334 (NGHHGVGGGGELHQSVSSGGGGGGFDSDSGGANGGNVNGSSSS) is disordered. Residues 309-328 (SGGGGGGFDSDSGGANGGNV) are compositionally biased toward gly residues.

As to quaternary structure, homo- and heterodimer with other ZFHD proteins. Interacts with MIF1, MIF2 and MIF3; these interactions prevent nuclear localization and DNA-binding to inhibit transcription regulation activity. Binds to ZHD1, ZHD2, ZHD4, ZHD5, ZHD6, ZHD7 and ZHD8. Interacts with KIN10 and KIN11. Mostly expressed in rosettes (e.g. young leaves), flowers (e.g. styles), siliques and inflorescence.

It is found in the nucleus. Putative transcription factor. Probably involved in establishing polarity during leaf development through the gibberellic acid (GA) signaling pathway. The sequence is that of Zinc-finger homeodomain protein 10 (ZHD10) from Arabidopsis thaliana (Mouse-ear cress).